The primary structure comprises 317 residues: Probable deoxyhypusine synthase 1 (317 aa).

The Nucleophile role is filled by Lys-285.

Belongs to the deoxyhypusine synthase family. Requires NAD(+) as cofactor.

The catalysed reaction is [eIF5A protein]-L-lysine + spermidine = [eIF5A protein]-deoxyhypusine + propane-1,3-diamine. It functions in the pathway protein modification; eIF5A hypusination. In terms of biological role, catalyzes the NAD-dependent oxidative cleavage of spermidine and the subsequent transfer of the butylamine moiety of spermidine to the epsilon-amino group of a specific lysine residue of the eIF-5A precursor protein to form the intermediate deoxyhypusine residue. This chain is Probable deoxyhypusine synthase 1 (dys1), found in Methanosarcina mazei (strain ATCC BAA-159 / DSM 3647 / Goe1 / Go1 / JCM 11833 / OCM 88) (Methanosarcina frisia).